A 439-amino-acid polypeptide reads, in one-letter code: Paraneoplastic antigen-like protein 8A (439 aa).

The interval 208–439 (SALKAETPNN…RRATNESRKV (232 aa)) is disordered. The span at 231–249 (LVRRAGAKSRSRRKKQKKN) shows a compositional bias: basic residues. 3 stretches are compositionally biased toward basic and acidic residues: residues 314 to 326 (GPRE…RAEA), 395 to 404 (SRREASDQKA), and 423 to 439 (AKPE…SRKV).

The protein belongs to the PNMA family.

This Homo sapiens (Human) protein is Paraneoplastic antigen-like protein 8A.